We begin with the raw amino-acid sequence, 120 residues long: Ribosome-binding factor A (120 aa).

It belongs to the RbfA family. Monomer. Binds 30S ribosomal subunits, but not 50S ribosomal subunits or 70S ribosomes.

The protein resides in the cytoplasm. Functionally, one of several proteins that assist in the late maturation steps of the functional core of the 30S ribosomal subunit. Associates with free 30S ribosomal subunits (but not with 30S subunits that are part of 70S ribosomes or polysomes). Required for efficient processing of 16S rRNA. May interact with the 5'-terminal helix region of 16S rRNA. The protein is Ribosome-binding factor A of Borrelia garinii subsp. bavariensis (strain ATCC BAA-2496 / DSM 23469 / PBi) (Borreliella bavariensis).